Here is a 214-residue protein sequence, read N- to C-terminus: rRNA methyltransferase 2, mitochondrial (214 aa).

A mitochondrion-targeting transit peptide spans 1–18; the sequence is MFSTKKSQGNLHKYIQRQ. Residues 63–66, aspartate 83, 100–101, and aspartate 125 each bind S-adenosyl-L-methionine; these read PGSW and DI. Residue lysine 169 is the Proton acceptor of the active site.

It belongs to the class I-like SAM-binding methyltransferase superfamily. RNA methyltransferase RlmE family.

Its subcellular location is the mitochondrion. The catalysed reaction is a uridine in rRNA + S-adenosyl-L-methionine = a 2'-O-methyluridine in rRNA + S-adenosyl-L-homocysteine + H(+). Functionally, S-adenosyl-L-methionine-dependent 2'-O-ribose methyltransferase that catalyzes the formation of 2'-O-methyluridine at position 808 (Um808) in the mitochondrial large subunit ribosomal RNA (mtLSU rRNA), a universally conserved modification in the peptidyl transferase domain of the mtLSU rRNA. This activity may require prior 2'-O-methylguanosine modification at position 809 (Gm809) by MRM3. Essential for late-stage assembly of mtLSU required for efficient translation of mitochondrial DNA encoded proteins; methyltransferase activity is not required for this function. Essential for mitochondrial respiratory function. The protein is rRNA methyltransferase 2, mitochondrial of Caenorhabditis elegans.